We begin with the raw amino-acid sequence, 199 residues long: 7-methyl-GTP pyrophosphatase (199 aa).

D76 functions as the Proton acceptor in the catalytic mechanism.

The protein belongs to the Maf family. YceF subfamily. Requires a divalent metal cation as cofactor.

It is found in the cytoplasm. It catalyses the reaction N(7)-methyl-GTP + H2O = N(7)-methyl-GMP + diphosphate + H(+). In terms of biological role, nucleoside triphosphate pyrophosphatase that hydrolyzes 7-methyl-GTP (m(7)GTP). May have a dual role in cell division arrest and in preventing the incorporation of modified nucleotides into cellular nucleic acids. The protein is 7-methyl-GTP pyrophosphatase (maf-2) of Brucella suis biovar 1 (strain 1330).